We begin with the raw amino-acid sequence, 345 residues long: MAVSRTLRELAEYLGGTVAGDESKTISGVASLDDAADHQITFLANPRYAPKVATTGAGAVVLPPGGERHGRNAIHVANPYLAFAKLLTLFHVAPRKPQGVMEGALVGHNVAMGSDVTIYPGAFVGDGVTLGDRVTIFPGVVIYEGVTLGSDVTLHSNVVVYQGCRIGNRVTIHAGTIIGSDGFGYAPDGDGFYKIPQLGIVVIEDDVEVGANTTIDRAALAATRIGRGTKIDNLVMIAHNCVIGENCTIVSQVGISGSTKLGRRVTLAGQVGVAGHLEIGDNSMVGAKSGIPGNIPAGSMVSGIPAFNHRDWLRASAVVPKLPELRKTIAELEKRVRELEEKQGA.

The active-site Proton acceptor is the His239.

This sequence belongs to the transferase hexapeptide repeat family. LpxD subfamily. Homotrimer.

The enzyme catalyses a UDP-3-O-[(3R)-3-hydroxyacyl]-alpha-D-glucosamine + a (3R)-hydroxyacyl-[ACP] = a UDP-2-N,3-O-bis[(3R)-3-hydroxyacyl]-alpha-D-glucosamine + holo-[ACP] + H(+). Its pathway is bacterial outer membrane biogenesis; LPS lipid A biosynthesis. Its function is as follows. Catalyzes the N-acylation of UDP-3-O-acylglucosamine using 3-hydroxyacyl-ACP as the acyl donor. Is involved in the biosynthesis of lipid A, a phosphorylated glycolipid that anchors the lipopolysaccharide to the outer membrane of the cell. This chain is UDP-3-O-acylglucosamine N-acyltransferase, found in Geobacter metallireducens (strain ATCC 53774 / DSM 7210 / GS-15).